A 148-amino-acid chain; its full sequence is IQ domain-containing protein F5 (148 aa).

2 consecutive IQ domains span residues Glu11–Ile40 and Gln67–Ile96.

In Homo sapiens (Human), this protein is IQ domain-containing protein F5 (IQCF5).